A 464-amino-acid chain; its full sequence is ATP-dependent protease ATPase subunit HslU (464 aa).

Residues Val-19, 61 to 66 (GVGKTE), Asp-278, Glu-342, and Arg-414 each bind ATP.

Belongs to the ClpX chaperone family. HslU subfamily. As to quaternary structure, a double ring-shaped homohexamer of HslV is capped on each side by a ring-shaped HslU homohexamer. The assembly of the HslU/HslV complex is dependent on binding of ATP.

It localises to the cytoplasm. ATPase subunit of a proteasome-like degradation complex; this subunit has chaperone activity. The binding of ATP and its subsequent hydrolysis by HslU are essential for unfolding of protein substrates subsequently hydrolyzed by HslV. HslU recognizes the N-terminal part of its protein substrates and unfolds these before they are guided to HslV for hydrolysis. The sequence is that of ATP-dependent protease ATPase subunit HslU from Halalkalibacterium halodurans (strain ATCC BAA-125 / DSM 18197 / FERM 7344 / JCM 9153 / C-125) (Bacillus halodurans).